We begin with the raw amino-acid sequence, 124 residues long: Small ribosomal subunit protein uS12 (124 aa).

The interval 1–28 (MPTISQLVGSERKRLTKKTKSPALKSCP) is disordered. Asp89 is subject to 3-methylthioaspartic acid. The disordered stretch occupies residues 104 to 124 (TAGVKDRRQSRSKYGAKAPKD).

Belongs to the universal ribosomal protein uS12 family. In terms of assembly, part of the 30S ribosomal subunit. Contacts proteins S8 and S17. May interact with IF1 in the 30S initiation complex.

Functionally, with S4 and S5 plays an important role in translational accuracy. In terms of biological role, interacts with and stabilizes bases of the 16S rRNA that are involved in tRNA selection in the A site and with the mRNA backbone. Located at the interface of the 30S and 50S subunits, it traverses the body of the 30S subunit contacting proteins on the other side and probably holding the rRNA structure together. The combined cluster of proteins S8, S12 and S17 appears to hold together the shoulder and platform of the 30S subunit. This chain is Small ribosomal subunit protein uS12, found in Prochlorococcus marinus (strain MIT 9301).